We begin with the raw amino-acid sequence, 719 residues long: Fusicoccadiene synthase (719 aa).

Positions 1 to 334 (MEFKYSEVVE…RYNPDVSFNK (334 aa)) are fusicocca-2,10(14)-diene synthase. Asp92 and Asp96 together coordinate Mg(2+). Positions 335–719 (TQLEWMRQGL…MRLLLELLRV (385 aa)) are geranylgeranyl diphosphate synthase. The segment at 358 to 404 (EIDSDESAVSPTADESDSTEDSLGSGSRQDSSLSTGLSLSPVHSNEG) is disordered. Residues 378–400 (DSLGSGSRQDSSLSTGLSLSPVH) show a composition bias toward polar residues. Isopentenyl diphosphate-binding residues include Lys435, Arg438, and His467. 2 residues coordinate Mg(2+): Asp474 and Asp478. Arg483 serves as a coordination point for dimethylallyl diphosphate. Residue Arg484 participates in isopentenyl diphosphate binding. 6 residues coordinate dimethylallyl diphosphate: Lys561, Thr562, Gln602, Asn609, Lys619, and Lys629.

The protein in the N-terminal section; belongs to the terpene synthase family. This sequence in the C-terminal section; belongs to the FPP/GGPP synthase family. As to quaternary structure, hexamer.

The catalysed reaction is geranylgeranyl diphosphate = fusicocca-2,10(14)-diene + diphosphate. The enzyme catalyses isopentenyl diphosphate + (2E,6E)-farnesyl diphosphate = (2E,6E,10E)-geranylgeranyl diphosphate + diphosphate. It functions in the pathway mycotoxin biosynthesis. In terms of biological role, multifunctional diterpene synthase; part of the 2 gene clusters that mediate the biosynthesis of fusicoccins, diterpene glucosides that display phytohormone-like activity and function as potent activators of plasma membrane H(+)-ATPases in plants by modifying 14-3-3 proteins and cause the plant disease constriction canker. The first step in the pathway is performed by the fusicoccadiene synthase PaFS that possesses both prenyl transferase and terpene cyclase activity, converting isopentenyl diphosphate and dimethylallyl diphosphate into geranylgeranyl diphosphate (GGDP) and successively converting GGDP into fusicocca-2,10(14)-diene, a precursor for fusicoccin H. Fusicoccadiene synthase is an allosteric enzyme for GGPP cyclization that generates 64% fusicoccadiene, 9% delta-araneosene, and one additional unidentified diterpene product, when incubated with GGPP. In the absence of isopentenyl diphosphate (IPP), PaFS can also solvolyze the shorter chain geranyl diphosphate (GPP) and farnesyl diphosphate (FPP) as alternative substrates to yield predominantly acyclic products. FPP is converted to farnesol (60.5%), nerolidol (14.0%), and farnesene (14.0%), while GPP is converted to a mixture of geraniol (59.5%) and linalool (35.0%). The second step is the oxidation at the C-8 position by the cytochrome P450 monooxygenase PaP450-2 to yield fusicocca-2,10(14)-diene-8-beta-ol. The cytochrome P450 monooxygenase PaP450-1 then catalyzes the hydroxylation at the C-16 position to produce fusicocca-2,10(14)-diene-8-beta,16-diol. The dioxygenase fc-dox then catalyzes the 16-oxydation of fusicocca-2,10(14)-diene-8-beta,16-diol to yield an aldehyde (8-beta-hydroxyfusicocca-1,10(14)-dien-16-al). The short-chain dehydrogenase/reductase fc-sdr catalyzes the reduction of the aldehyde to yield fusicocca-1,10(14)-diene-8-beta,16-diol. The next step is the hydroxylation at C-9 performed by the cytochrome P450 monooxygenase PaP450-3 that leads to fusicoccin H aglycon which is glycosylated to fusicoccin H by the O-glycosyltransferase PAGT. Hydroxylation at C-12 by the cytochrome P450 monooxygenase PaP450-4 leads then to the production of fusicoccin Q and is followed by methylation by the O-methyltransferase PAMT to yield fusicoccin P. Fusicoccin P is further converted to fusicoccin J via prenylation by the O-glucose prenyltransferase PaPT. Cytochrome P450 monooxygenase PaP450-5 then performs hydroxylation at C-19 to yield dideacetyl-fusicoccin A which is acetylated to 3'-O-deacetyl-fusicoccin A by the O-acetyltransferase PaAT-2. Finally, a another acetylation by the O-acetyltransferase PaAT-1 yields fusicoccin A. The chain is Fusicoccadiene synthase from Phomopsis amygdali (Fusicoccum amygdali).